Consider the following 443-residue polypeptide: Ribosomal protein uS12 methylthiotransferase RimO (443 aa).

The 112-residue stretch at 5–116 (PTIAINHLGC…IVDIIRRTEQ (112 aa)) folds into the MTTase N-terminal domain. [4Fe-4S] cluster contacts are provided by cysteine 14, cysteine 50, cysteine 79, cysteine 154, cysteine 158, and cysteine 161. The Radical SAM core domain occupies 140-369 (TTNEAIAYLR…MALQQPISAQ (230 aa)). A TRAM domain is found at 372–438 (AACLGQTLDV…DYDLYGMTAE (67 aa)).

This sequence belongs to the methylthiotransferase family. RimO subfamily. The cofactor is [4Fe-4S] cluster.

It is found in the cytoplasm. The catalysed reaction is L-aspartate(89)-[ribosomal protein uS12]-hydrogen + (sulfur carrier)-SH + AH2 + 2 S-adenosyl-L-methionine = 3-methylsulfanyl-L-aspartate(89)-[ribosomal protein uS12]-hydrogen + (sulfur carrier)-H + 5'-deoxyadenosine + L-methionine + A + S-adenosyl-L-homocysteine + 2 H(+). Functionally, catalyzes the methylthiolation of an aspartic acid residue of ribosomal protein uS12. The polypeptide is Ribosomal protein uS12 methylthiotransferase RimO (Synechocystis sp. (strain ATCC 27184 / PCC 6803 / Kazusa)).